We begin with the raw amino-acid sequence, 160 residues long: Transcription antitermination protein NusB (160 aa).

This sequence belongs to the NusB family.

Involved in transcription antitermination. Required for transcription of ribosomal RNA (rRNA) genes. Binds specifically to the boxA antiterminator sequence of the ribosomal RNA (rrn) operons. The chain is Transcription antitermination protein NusB from Rhizobium rhizogenes (strain K84 / ATCC BAA-868) (Agrobacterium radiobacter).